A 432-amino-acid chain; its full sequence is Glutamate-1-semialdehyde 2,1-aminomutase 2 (432 aa).

At K268 the chain carries N6-(pyridoxal phosphate)lysine.

It belongs to the class-III pyridoxal-phosphate-dependent aminotransferase family. HemL subfamily. In terms of assembly, homodimer. Requires pyridoxal 5'-phosphate as cofactor.

The protein localises to the cytoplasm. It catalyses the reaction (S)-4-amino-5-oxopentanoate = 5-aminolevulinate. The protein operates within porphyrin-containing compound metabolism; protoporphyrin-IX biosynthesis; 5-aminolevulinate from L-glutamyl-tRNA(Glu): step 2/2. The protein is Glutamate-1-semialdehyde 2,1-aminomutase 2 of Listeria monocytogenes serotype 4b (strain CLIP80459).